Reading from the N-terminus, the 344-residue chain is tRNA N6-adenosine threonylcarbamoyltransferase (344 aa).

Fe cation contacts are provided by His111 and His115. Substrate contacts are provided by residues 134 to 138 (LVSGG), Asp167, Gly180, and Asn273. Asp301 serves as a coordination point for Fe cation.

This sequence belongs to the KAE1 / TsaD family. It depends on Fe(2+) as a cofactor.

Its subcellular location is the cytoplasm. The enzyme catalyses L-threonylcarbamoyladenylate + adenosine(37) in tRNA = N(6)-L-threonylcarbamoyladenosine(37) in tRNA + AMP + H(+). Its function is as follows. Required for the formation of a threonylcarbamoyl group on adenosine at position 37 (t(6)A37) in tRNAs that read codons beginning with adenine. Is involved in the transfer of the threonylcarbamoyl moiety of threonylcarbamoyl-AMP (TC-AMP) to the N6 group of A37, together with TsaE and TsaB. TsaD likely plays a direct catalytic role in this reaction. In Cupriavidus necator (strain ATCC 17699 / DSM 428 / KCTC 22496 / NCIMB 10442 / H16 / Stanier 337) (Ralstonia eutropha), this protein is tRNA N6-adenosine threonylcarbamoyltransferase.